We begin with the raw amino-acid sequence, 473 residues long: Ribulose bisphosphate carboxylase large chain (473 aa).

The propeptide occupies 1 to 2; the sequence is MS. P3 carries the N-acetylproline modification. N6,N6,N6-trimethyllysine is present on K14. 2 residues coordinate substrate: N123 and T173. Catalysis depends on K175, which acts as the Proton acceptor. K177 is a binding site for substrate. K201, D203, and E204 together coordinate Mg(2+). Residue K201 is modified to N6-carboxylysine. H294 functions as the Proton acceptor in the catalytic mechanism. 3 residues coordinate substrate: R295, H327, and S379.

This sequence belongs to the RuBisCO large chain family. Type I subfamily. In terms of assembly, heterohexadecamer of 8 large chains and 8 small chains; disulfide-linked. The disulfide link is formed within the large subunit homodimers. Mg(2+) serves as cofactor. In terms of processing, the disulfide bond which can form in the large chain dimeric partners within the hexadecamer appears to be associated with oxidative stress and protein turnover.

The protein resides in the plastid. It is found in the chloroplast. The enzyme catalyses 2 (2R)-3-phosphoglycerate + 2 H(+) = D-ribulose 1,5-bisphosphate + CO2 + H2O. It carries out the reaction D-ribulose 1,5-bisphosphate + O2 = 2-phosphoglycolate + (2R)-3-phosphoglycerate + 2 H(+). In terms of biological role, ruBisCO catalyzes two reactions: the carboxylation of D-ribulose 1,5-bisphosphate, the primary event in carbon dioxide fixation, as well as the oxidative fragmentation of the pentose substrate in the photorespiration process. Both reactions occur simultaneously and in competition at the same active site. The chain is Ribulose bisphosphate carboxylase large chain from Cajanus cajan (Pigeon pea).